We begin with the raw amino-acid sequence, 266 residues long: Indole-3-glycerol phosphate synthase (266 aa).

It belongs to the TrpC family.

The enzyme catalyses 1-(2-carboxyphenylamino)-1-deoxy-D-ribulose 5-phosphate + H(+) = (1S,2R)-1-C-(indol-3-yl)glycerol 3-phosphate + CO2 + H2O. It participates in amino-acid biosynthesis; L-tryptophan biosynthesis; L-tryptophan from chorismate: step 4/5. This Janthinobacterium sp. (strain Marseille) (Minibacterium massiliensis) protein is Indole-3-glycerol phosphate synthase.